The chain runs to 290 residues: AA9 family lytic polysaccharide monooxygenase A (290 aa).

Residues 1-17 form the signal peptide; it reads MKLSLLASVALVPFVSA. Cu(2+)-binding residues include His18 and His101. Cys67 and Cys189 form a disulfide bridge. Position 176 (His176) interacts with O2. Tyr187 provides a ligand contact to Cu(2+). 2 N-linked (GlcNAc...) asparagine glycosylation sites follow: Asn220 and Asn254. The disordered stretch occupies residues 240–290; it reads GGSGSGSSSYSKVANVTSSDESSQSGASSSQGTVSTCPNKYNRRHARQFKP. The segment covering 245 to 275 has biased composition (low complexity); the sequence is GSSSYSKVANVTSSDESSQSGASSSQGTVST. A compositionally biased stretch (basic residues) spans 280–290; the sequence is YNRRHARQFKP.

It belongs to the polysaccharide monooxygenase AA9 family. Cu(2+) is required as a cofactor.

It is found in the secreted. It carries out the reaction [(1-&gt;4)-beta-D-glucosyl]n+m + reduced acceptor + O2 = 4-dehydro-beta-D-glucosyl-[(1-&gt;4)-beta-D-glucosyl]n-1 + [(1-&gt;4)-beta-D-glucosyl]m + acceptor + H2O.. In terms of biological role, lytic polysaccharide monooxygenase (LPMO) that depolymerizes crystalline and amorphous polysaccharides via the oxidation of scissile alpha- or beta-(1-4)-glycosidic bonds, yielding exclusively C1 oxidation products. Catalysis by LPMOs requires the reduction of the active-site copper from Cu(II) to Cu(I) by a reducing agent and H(2)O(2) or O(2) as a cosubstrate. The polypeptide is AA9 family lytic polysaccharide monooxygenase A (Aspergillus fumigatus (strain ATCC MYA-4609 / CBS 101355 / FGSC A1100 / Af293) (Neosartorya fumigata)).